Reading from the N-terminus, the 602-residue chain is MSTPLDHIRNFSIVAHIDHGKSTLADRLIQLTGGLDTREMKDQVLDSMDIERERGITIKAQTVRLSYKAKNGEDYVLNLIDTPGHVDFAYEVSRSLAACEGSLLVVDASQGVEAQTLANVYQAIDNNHEIVVVLNKIDLPAAEPERVKQQIEEVIGIDASDAVEISAKTGLGIEDVLEAIVNKLPAPKEGDRNAPLKAMLVDSWYDSYLGVIVLVRVIDGVLKKGQTIRMMGTGAKYPVERTGVFTPKMVQVDDLGPGELGFITASIKEVADTRVGDTITEDRRPTENMLSGFKPAQPVVFCGLFPVDAADFEDLRGAMGKLRLNDASFSFEMETSAALGFGFRCGFLGLLHLEIIQERLEREFNLDLITTAPSVVYRLNMTDGTHKELHNPADMPDVVKIASIEEPWIKATIMTPDDYLGAIMKLCQERRGIQIDLTYVGPRAMITYDLPLNEVVFDFYDRLKSISKGYASFDYNLSDYREGDLVKMSILVNEEPVDALSMLVHRSAAEKRGRALCEKLKELIPQHMFKIPIQAAIGGRIVARETISALRKDVTAKCYGGDVTRKRKLLEKQKESKKRMRQFGKVEIPQEAFIQALKMGDD.

One can recognise a tr-type G domain in the interval aspartate 6–lysine 188. GTP-binding positions include aspartate 18–threonine 23 and asparagine 135–aspartate 138.

Belongs to the TRAFAC class translation factor GTPase superfamily. Classic translation factor GTPase family. LepA subfamily.

The protein resides in the cell inner membrane. The enzyme catalyses GTP + H2O = GDP + phosphate + H(+). Functionally, required for accurate and efficient protein synthesis under certain stress conditions. May act as a fidelity factor of the translation reaction, by catalyzing a one-codon backward translocation of tRNAs on improperly translocated ribosomes. Back-translocation proceeds from a post-translocation (POST) complex to a pre-translocation (PRE) complex, thus giving elongation factor G a second chance to translocate the tRNAs correctly. Binds to ribosomes in a GTP-dependent manner. This chain is Elongation factor 4, found in Brucella melitensis biotype 2 (strain ATCC 23457).